A 215-amino-acid polypeptide reads, in one-letter code: Myelin protein zero-like protein 2 (215 aa).

Positions 1-26 (MYGKSPTRAVLFLLGLQLTALWPTAA) are cleaved as a signal peptide. Residues 27–141 (VEIYTPRVLE…DGLIGEIQLS (115 aa)) enclose the Ig-like V-type domain. Over 27–154 (VEIYTPRVLE…TVRFSEIHFL (128 aa)) the chain is Extracellular. Asparagine 39 and asparagine 118 each carry an N-linked (GlcNAc...) asparagine glycan. The cysteines at positions 47 and 123 are disulfide-linked. The helical transmembrane segment at 155–175 (ALAIGSACALMVIIVIVVVLF) threads the bilayer. Residues 176–215 (QHFRKKRRAERAHRVVEIKSKEEEKLNQEKKASVSLEYTD) are Cytoplasmic-facing.

It belongs to the myelin P0 protein family.

The protein resides in the membrane. Its function is as follows. Mediates homophilic cell-cell adhesion. The chain is Myelin protein zero-like protein 2 (MPZL2) from Bos taurus (Bovine).